Reading from the N-terminus, the 324-residue chain is uncharacterized protein (324 aa).

A run of 9 helical transmembrane segments spans residues 34–54 (MAVLQSLNIFLGEACLWFYVL), 76–96 (VFMALPAIMDICGSTLMNVGL), 103–123 (IYQMTRGSLIIFVALFATTLL), 127–147 (IGQLQWLSLSFVVLGVAIVGY), 158–178 (PILGITAVLIGQFFLATQFTI), 198–218 (GTYGVFFVLLGMIISYYFIGS), 243–263 (YVISGVILVSIAFFNVSGLAI), 275–295 (LDIARTFGIWIIAMAMGMESF), and 297–317 (LLQFLGFVLLIYGIFTYHSII).

It is found in the membrane. This is an uncharacterized protein from Schizosaccharomyces pombe (strain 972 / ATCC 24843) (Fission yeast).